The chain runs to 242 residues: MLTRKQYELLLLIDGHLRKTGFSPSFEEMKAALNLKSKSGIHRLISALEERGFLRRRHHRARALEVIRMPEAASMPVPKTAPSAPSFASPPAFTPNVIQGSFSSRIAGVRAAQDASAVQLPLYGRIAAGMPIEALRDTSAYLSVPIDMLGNGEHYALEVAGDSMIDAGIFDGDTVIIQQSDLAENGQIVVALIDDTEVTLKRLRRRGKSVALEPANERHETRIFPADRVRVQGRLIGLLRRY.

The segment at residues 26–46 is a DNA-binding region (H-T-H motif); sequence FEEMKAALNLKSKSGIHRLIS. Catalysis depends on for autocatalytic cleavage activity residues Ser-163 and Lys-201.

It belongs to the peptidase S24 family. In terms of assembly, homodimer.

The enzyme catalyses Hydrolysis of Ala-|-Gly bond in repressor LexA.. In terms of biological role, represses a number of genes involved in the response to DNA damage (SOS response), including recA and lexA. In the presence of single-stranded DNA, RecA interacts with LexA causing an autocatalytic cleavage which disrupts the DNA-binding part of LexA, leading to derepression of the SOS regulon and eventually DNA repair. The protein is LexA repressor of Granulibacter bethesdensis (strain ATCC BAA-1260 / CGDNIH1).